A 363-amino-acid chain; its full sequence is Peptide chain release factor 1 (363 aa).

Glutamine 237 bears the N5-methylglutamine mark. The span at 284–297 shows a compositional bias: basic and acidic residues; it reads ERAKQQSERSEQRR. Residues 284-306 form a disordered region; it reads ERAKQQSERSEQRRLAVGSGDRS.

This sequence belongs to the prokaryotic/mitochondrial release factor family. Methylated by PrmC. Methylation increases the termination efficiency of RF1.

The protein localises to the cytoplasm. Its function is as follows. Peptide chain release factor 1 directs the termination of translation in response to the peptide chain termination codons UAG and UAA. This is Peptide chain release factor 1 from Halorhodospira halophila (strain DSM 244 / SL1) (Ectothiorhodospira halophila (strain DSM 244 / SL1)).